Here is an 83-residue protein sequence, read N- to C-terminus: Colicin-E5 immunity protein in ColE9 (83 aa).

This is Colicin-E5 immunity protein in ColE9 from Escherichia coli.